The chain runs to 290 residues: Protease HtpX (290 aa).

Helical transmembrane passes span 4–24 (IFLF…TLKL) and 36–56 (GSLL…SLFI). His-142 provides a ligand contact to Zn(2+). Residue Glu-143 is part of the active site. His-146 provides a ligand contact to Zn(2+). Helical transmembrane passes span 150–170 (GDMV…MFFA) and 193–213 (FVAT…IVMW). Glu-219 provides a ligand contact to Zn(2+).

It belongs to the peptidase M48B family. It depends on Zn(2+) as a cofactor.

Its subcellular location is the cell inner membrane. In Stutzerimonas stutzeri (strain A1501) (Pseudomonas stutzeri), this protein is Protease HtpX.